The primary structure comprises 279 residues: Acetyl-coenzyme A carboxylase carboxyl transferase subunit beta (279 aa).

A CoA carboxyltransferase N-terminal domain is found at 23 to 279; that stretch reads LWWKCEECGA…LTTLLSLMKL (257 aa). The Zn(2+) site is built by Cys27, Cys30, Cys46, and Cys49. A C4-type zinc finger spans residues 27–49; sequence CEECGAALHKKQMEASDHTCPQC.

Belongs to the AccD/PCCB family. In terms of assembly, acetyl-CoA carboxylase is a heterohexamer composed of biotin carboxyl carrier protein (AccB), biotin carboxylase (AccC) and two subunits each of ACCase subunit alpha (AccA) and ACCase subunit beta (AccD). Zn(2+) is required as a cofactor.

Its subcellular location is the cytoplasm. It catalyses the reaction N(6)-carboxybiotinyl-L-lysyl-[protein] + acetyl-CoA = N(6)-biotinyl-L-lysyl-[protein] + malonyl-CoA. Its pathway is lipid metabolism; malonyl-CoA biosynthesis; malonyl-CoA from acetyl-CoA: step 1/1. Functionally, component of the acetyl coenzyme A carboxylase (ACC) complex. Biotin carboxylase (BC) catalyzes the carboxylation of biotin on its carrier protein (BCCP) and then the CO(2) group is transferred by the transcarboxylase to acetyl-CoA to form malonyl-CoA. This chain is Acetyl-coenzyme A carboxylase carboxyl transferase subunit beta, found in Chlorobium chlorochromatii (strain CaD3).